Consider the following 286-residue polypeptide: 2-dehydro-3-deoxyphosphooctonate aldolase (286 aa).

It belongs to the KdsA family.

Its subcellular location is the cytoplasm. The enzyme catalyses D-arabinose 5-phosphate + phosphoenolpyruvate + H2O = 3-deoxy-alpha-D-manno-2-octulosonate-8-phosphate + phosphate. It functions in the pathway carbohydrate biosynthesis; 3-deoxy-D-manno-octulosonate biosynthesis; 3-deoxy-D-manno-octulosonate from D-ribulose 5-phosphate: step 2/3. It participates in bacterial outer membrane biogenesis; lipopolysaccharide biosynthesis. The sequence is that of 2-dehydro-3-deoxyphosphooctonate aldolase from Haemophilus ducreyi (strain 35000HP / ATCC 700724).